The sequence spans 300 residues: Cell surface glycoprotein CD200 receptor 1-A (300 aa).

Positions 1–24 (MEIAGKAVCVFLLLAIIKLRRSEG) are cleaved as a signal peptide. The region spanning 25 to 124 (INRVSANLGH…GNFHRLYHLT (100 aa)) is the Ig-like V-type domain. Residues 25-213 (INRVSANLGH…SINCSSSYRD (189 aa)) lie on the Extracellular side of the membrane. 2 cysteine pairs are disulfide-bonded: cysteine 40/cysteine 108 and cysteine 143/cysteine 192. Residues asparagine 45, asparagine 76, asparagine 105, asparagine 171, asparagine 200, and asparagine 206 are each glycosylated (N-linked (GlcNAc...) asparagine). Residues 122–206 (HLTVIVAPRM…ATLNETKSIN (85 aa)) form the Ig-like C2-type domain. The helical transmembrane segment at 214–234 (LILCIAIILSFLIIITFMAVI) threads the bilayer. The Cytoplasmic portion of the chain corresponds to 235–300 (YYLKLHGCRF…NLPQGQSPAT (66 aa)).

Belongs to the CD200R family. Glycosylated. Post-translationally, phosphorylated. Highly expressed in macrophages, peripheral blood lymphocytes (PBL) and peripheral blood mononuclear cells (PBMC). Weakly expressed in bursa, thymus, spleen, liver and brain.

It is found in the membrane. It localises to the secreted. The protein is Cell surface glycoprotein CD200 receptor 1-A (CD200R1A) of Gallus gallus (Chicken).